Consider the following 104-residue polypeptide: Large ribosomal subunit protein bL21 (104 aa).

Belongs to the bacterial ribosomal protein bL21 family. As to quaternary structure, part of the 50S ribosomal subunit. Contacts protein L20.

This protein binds to 23S rRNA in the presence of protein L20. The chain is Large ribosomal subunit protein bL21 from Helicobacter hepaticus (strain ATCC 51449 / 3B1).